A 404-amino-acid chain; its full sequence is MKLPIYLDYSATCPVDPRVAEKMVQYMTMDGTFGNPASRSHRYGWQAEEAVDTAREQIAELLNADPREIVFTSGATESDNLAIKGAAHFYSKQGKHVITSKTEHKAVLDTCRQLEREGFEVTYLEPESNGLISLSKLEAAMRDDTVLVSIMHVNNEIGVIQDIEAIGELCRSRKIIFHVDAAQSAGKVAIDVQKLKVDLISLSAHKIYGPKGIGALYVRRKPRIRLEAQMHGGGHERGFRSGTLPTHQIVGMGEAFRIAKLDMEKDYQHALALRNRLLDGVKDMEAVTINGDLDQRVPHNLNISFAFVEGESLLMSLKDLAVSSGSACTSASLEPSYVLRALGLNDELAHSSIRFSFGRFTTEEEIDYAIEQIRVAVAKLRDMSPLWDMYKEGIDLNTVEWAHH.

Pyridoxal 5'-phosphate is bound by residues 75–76 (AT), Asn155, Gln183, and 203–205 (SAH). Lys206 carries the N6-(pyridoxal phosphate)lysine modification. Pyridoxal 5'-phosphate is bound at residue Thr243. Cys328 serves as the catalytic Cysteine persulfide intermediate. Cys328 is a [2Fe-2S] cluster binding site.

This sequence belongs to the class-V pyridoxal-phosphate-dependent aminotransferase family. NifS/IscS subfamily. Homodimer. Forms a heterotetramer with IscU, interacts with other sulfur acceptors. Requires pyridoxal 5'-phosphate as cofactor.

The protein resides in the cytoplasm. The enzyme catalyses (sulfur carrier)-H + L-cysteine = (sulfur carrier)-SH + L-alanine. It participates in cofactor biosynthesis; iron-sulfur cluster biosynthesis. Its function is as follows. Master enzyme that delivers sulfur to a number of partners involved in Fe-S cluster assembly, tRNA modification or cofactor biosynthesis. Catalyzes the removal of elemental sulfur atoms from cysteine to produce alanine. Functions as a sulfur delivery protein for Fe-S cluster synthesis onto IscU, an Fe-S scaffold assembly protein, as well as other S acceptor proteins. The chain is Cysteine desulfurase IscS from Vibrio vulnificus (strain YJ016).